A 234-amino-acid chain; its full sequence is MKNINLILAWLVHIFTASGLIVGLYSIISIVNGNYSLLLKLTVIGLIIDGIDGTMARKLKVKELIPEIDGTLLDNITDYINYTFIPVIFFYLGEFIEEKYKVAICIGILLSSAYQFSRTDAKTNDNYFRGFPSLWNLFVILNIIFKMEQITNLITMSICIITSFIPIKFIYPSKTKELRKITIPITIISCLIFVVSIFSELSTTALKMAKTVLILYFAYLTLASIYLTYKTRNR.

The Cytoplasmic portion of the chain corresponds to methionine 1–asparagine 3. A helical membrane pass occupies residues isoleucine 4–leucine 24. Topologically, residues tyrosine 25–serine 26 are periplasmic. A helical membrane pass occupies residues isoleucine 27–isoleucine 47. Residues isoleucine 48 to asparagine 75 lie on the Cytoplasmic side of the membrane. Residues isoleucine 76–isoleucine 96 traverse the membrane as a helical segment. The Periplasmic portion of the chain corresponds to glutamate 97 to glutamate 98. Residues lysine 99–phenylalanine 116 traverse the membrane as a helical segment. The Cytoplasmic portion of the chain corresponds to serine 117–asparagine 126. A helical transmembrane segment spans residues tyrosine 127–methionine 147. Residues glutamate 148–glutamine 149 lie on the Periplasmic side of the membrane. Residues isoleucine 150–isoleucine 170 traverse the membrane as a helical segment. Residues tyrosine 171–lysine 180 are Cytoplasmic-facing. The helical transmembrane segment at isoleucine 181–leucine 201 threads the bilayer. Over serine 202–lysine 207 the chain is Periplasmic. Residues methionine 208–threonine 228 traverse the membrane as a helical segment. Residues tyrosine 229 to arginine 234 are Cytoplasmic-facing.

Belongs to the CDP-alcohol phosphatidyltransferase class-I family. Requires Mn(2+) as cofactor.

Its subcellular location is the cell inner membrane. The catalysed reaction is a CDP-1,2-diacyl-sn-glycerol + choline = a 1,2-diacyl-sn-glycero-3-phosphocholine + CMP + H(+). Its function is as follows. Condenses choline with CDP-diglyceride to produce phosphatidylcholine and CMP. The polypeptide is Phosphatidylcholine synthase (Borreliella burgdorferi (strain ATCC 35210 / DSM 4680 / CIP 102532 / B31) (Borrelia burgdorferi)).